Here is a 444-residue protein sequence, read N- to C-terminus: Multidrug resistance protein MdtA (444 aa).

The first 20 residues, 1-20 (MKSQSKRTSRLFVFVGVVVA), serve as a signal peptide directing secretion. The segment covering 37-52 (NNTSGAQQSARGQDTS) has biased composition (polar residues). 2 disordered regions span residues 37–60 (NNTS…RNTP) and 399–444 (PRSA…AEKS). The segment covering 409 to 419 (ASAEKAAAEAE) has biased composition (low complexity). Residues 435 to 444 (ARSTTAAEKS) show a composition bias toward polar residues.

It belongs to the membrane fusion protein (MFP) (TC 8.A.1) family. As to quaternary structure, part of a tripartite efflux system composed of MdtA, MdtB and MdtC.

It localises to the cell inner membrane. In Yersinia pseudotuberculosis serotype I (strain IP32953), this protein is Multidrug resistance protein MdtA.